The primary structure comprises 447 residues: MLPPQLCWLPLLAALLPPVPAQKFSALTFLRVDQDKDRDCSLDCPSSPQKPLCASDGRTFLSRCEFQRAKCKDPQLEIAHRGNCKDVSRCVAERKYTQEQARKEFQQVFIPECNDDGTYSQVQCHSYTGYCWCVTPNGRPISGTAVAHKTPRCPGSINEKVPQREGAGKADDAAAPALETQPQGDEEDIASRYPTLWTEQVKSRQNKTNKNSASSCDQEHQSALEEAKQPKNDNVVIPECAHGGLYKPVQCHPSTGYCWCVLVDTGRPIPGTSTRYEQPKCDNTARAHPAKARDLYKNRPLQGCPGAKKHEFLTSVLDALSTDMVHAVSDPSSSSGRLSEPDPSHTLEERVVHWYFKLLDKNSSGDIGKKEIKPFKRFLRKKSKPKKCVKKFVEYCDMNNDKSITVQELMGCLGVTREEGKANTRKRHTPRGNAESSSSNRQPRKQG.

A signal peptide spans 1–21 (MLPPQLCWLPLLAALLPPVPA). A Kazal-like domain is found at 34 to 86 (QDKDRDCSLDCPSSPQKPLCASDGRTFLSRCEFQRAKCKDPQLEIAHRGNCKD). 6 disulfides stabilise this stretch: cysteine 40–cysteine 71, cysteine 44–cysteine 64, cysteine 53–cysteine 84, cysteine 90–cysteine 113, cysteine 124–cysteine 131, and cysteine 133–cysteine 153. The Thyroglobulin type-1 1 domain occupies 87-153 (VSRCVAERKY…TAVAHKTPRC (67 aa)). Positions 147–230 (AHKTPRCPGS…QSALEEAKQP (84 aa)) are disordered. The span at 161–172 (VPQREGAGKADD) shows a compositional bias: basic and acidic residues. A glycan (N-linked (GlcNAc...) asparagine) is linked at asparagine 206. Residues 206–216 (NKTNKNSASSC) are compositionally biased toward polar residues. Positions 213 to 281 (ASSCDQEHQS…TSTRYEQPKC (69 aa)) constitute a Thyroglobulin type-1 2 domain. 3 cysteine pairs are disulfide-bonded: cysteine 216/cysteine 240, cysteine 251/cysteine 258, and cysteine 260/cysteine 281. Over residues 217–230 (DQEHQSALEEAKQP) the composition is skewed to basic and acidic residues. 2 EF-hand domains span residues 347–382 (LEER…LRKK) and 384–419 (KPKK…TREE). Ca(2+) contacts are provided by aspartate 360, asparagine 362, serine 364, aspartate 366, glutamate 371, aspartate 397, asparagine 399, aspartate 401, serine 403, and glutamate 408. A glycan (N-linked (GlcNAc...) asparagine) is linked at asparagine 362. The segment at 416 to 447 (TREEGKANTRKRHTPRGNAESSSSNRQPRKQG) is disordered.

In terms of assembly, binds various proteins from the extracellular matrix. In terms of processing, N-glycosylated. As to expression, strongly expressed in ovary, followed by heart, muscle, spleen, brain, thymus, lung, liver, kidney, spleen, testis, ovary and skeletal muscle.

The protein localises to the secreted. It is found in the extracellular space. The protein resides in the extracellular matrix. Its subcellular location is the basement membrane. Its function is as follows. Can stimulate endothelial cell proliferation, migration, as well as angiogenesis. Promotes matrix assembly and cell adhesiveness. The protein is SPARC-related modular calcium-binding protein 2 (Smoc2) of Mus musculus (Mouse).